Here is a 526-residue protein sequence, read N- to C-terminus: 2-isopropylmalate synthase (526 aa).

In terms of domain architecture, Pyruvate carboxyltransferase spans 5 to 267; the sequence is VIIFDTTLRD…HTGIRHQEIY (263 aa). Asp14, His202, His204, and Asn238 together coordinate Mn(2+). Positions 393–526 are regulatory domain; sequence RLEYFSVQSG…VPSISTSSTH (134 aa).

The protein belongs to the alpha-IPM synthase/homocitrate synthase family. LeuA type 1 subfamily. Homodimer. Mn(2+) serves as cofactor.

It localises to the cytoplasm. It carries out the reaction 3-methyl-2-oxobutanoate + acetyl-CoA + H2O = (2S)-2-isopropylmalate + CoA + H(+). It participates in amino-acid biosynthesis; L-leucine biosynthesis; L-leucine from 3-methyl-2-oxobutanoate: step 1/4. Catalyzes the condensation of the acetyl group of acetyl-CoA with 3-methyl-2-oxobutanoate (2-ketoisovalerate) to form 3-carboxy-3-hydroxy-4-methylpentanoate (2-isopropylmalate). The protein is 2-isopropylmalate synthase of Edwardsiella ictaluri (strain 93-146).